The chain runs to 85 residues: Putative septation protein SpoVG (85 aa).

This sequence belongs to the SpoVG family.

Its function is as follows. Could be involved in septation. The protein is Putative septation protein SpoVG of Archaeoglobus fulgidus (strain ATCC 49558 / DSM 4304 / JCM 9628 / NBRC 100126 / VC-16).